The sequence spans 255 residues: Small ribosomal subunit protein uS2 (255 aa).

This sequence belongs to the universal ribosomal protein uS2 family.

This is Small ribosomal subunit protein uS2 from Streptococcus pyogenes serotype M28 (strain MGAS6180).